The sequence spans 744 residues: Eukaryotic translation initiation factor 3 subunit B (744 aa).

The segment at 1–21 (MAPSFDHLPDPEEDEYDEEEL) is disordered. Over residues 11 to 21 (PEEDEYDEEEL) the composition is skewed to acidic residues. The region spanning 40–126 (TFVVIDGLPE…HTLRVNKLTD (87 aa)) is the RRM domain. WD repeat units lie at residues 193–232 (DRQH…RQKR), 234–290 (AHPF…PLRS), 307–348 (PIKR…LLDK), and 577–622 (ADHY…LREE).

Belongs to the eIF-3 subunit B family. In terms of assembly, component of the eukaryotic translation initiation factor 3 (eIF-3) complex.

The protein resides in the cytoplasm. Functionally, RNA-binding component of the eukaryotic translation initiation factor 3 (eIF-3) complex, which is involved in protein synthesis of a specialized repertoire of mRNAs and, together with other initiation factors, stimulates binding of mRNA and methionyl-tRNAi to the 40S ribosome. The eIF-3 complex specifically targets and initiates translation of a subset of mRNAs involved in cell proliferation. The polypeptide is Eukaryotic translation initiation factor 3 subunit B (prt1) (Botryotinia fuckeliana (strain B05.10) (Noble rot fungus)).